We begin with the raw amino-acid sequence, 214 residues long: Orotate phosphoribosyltransferase (214 aa).

K26 lines the 5-phospho-alpha-D-ribose 1-diphosphate pocket. Position 34–35 (34–35) interacts with orotate; the sequence is FF. Residues 72–73, R99, K100, K103, H105, and 124–132 contribute to the 5-phospho-alpha-D-ribose 1-diphosphate site; these read YK and DDVITAGTA. Orotate-binding residues include T128 and R157.

It belongs to the purine/pyrimidine phosphoribosyltransferase family. PyrE subfamily. As to quaternary structure, homodimer. Mg(2+) serves as cofactor.

The catalysed reaction is orotidine 5'-phosphate + diphosphate = orotate + 5-phospho-alpha-D-ribose 1-diphosphate. Its pathway is pyrimidine metabolism; UMP biosynthesis via de novo pathway; UMP from orotate: step 1/2. Functionally, catalyzes the transfer of a ribosyl phosphate group from 5-phosphoribose 1-diphosphate to orotate, leading to the formation of orotidine monophosphate (OMP). The sequence is that of Orotate phosphoribosyltransferase from Pseudomonas fluorescens (strain Pf0-1).